We begin with the raw amino-acid sequence, 145 residues long: uncharacterized protein (145 aa).

Residues C86–C110 form a dksA C4-type zinc finger.

This is an uncharacterized protein from Aquifex aeolicus (strain VF5).